Here is a 424-residue protein sequence, read N- to C-terminus: Arginine biosynthesis bifunctional protein ArgJ (424 aa).

T166, K192, T203, E290, N419, and T424 together coordinate substrate. Catalysis depends on T203, which acts as the Nucleophile.

Belongs to the ArgJ family. As to quaternary structure, heterotetramer of two alpha and two beta chains.

It localises to the cytoplasm. It carries out the reaction N(2)-acetyl-L-ornithine + L-glutamate = N-acetyl-L-glutamate + L-ornithine. The catalysed reaction is L-glutamate + acetyl-CoA = N-acetyl-L-glutamate + CoA + H(+). The protein operates within amino-acid biosynthesis; L-arginine biosynthesis; L-ornithine and N-acetyl-L-glutamate from L-glutamate and N(2)-acetyl-L-ornithine (cyclic): step 1/1. It functions in the pathway amino-acid biosynthesis; L-arginine biosynthesis; N(2)-acetyl-L-ornithine from L-glutamate: step 1/4. Its function is as follows. Catalyzes two activities which are involved in the cyclic version of arginine biosynthesis: the synthesis of N-acetylglutamate from glutamate and acetyl-CoA as the acetyl donor, and of ornithine by transacetylation between N(2)-acetylornithine and glutamate. This chain is Arginine biosynthesis bifunctional protein ArgJ, found in Colwellia psychrerythraea (strain 34H / ATCC BAA-681) (Vibrio psychroerythus).